Consider the following 714-residue polypeptide: Inducible lysine decarboxylase (714 aa).

Lys-367 carries the N6-(pyridoxal phosphate)lysine modification.

It belongs to the Orn/Lys/Arg decarboxylase class-I family. In terms of assembly, homodecamer. Interacts with RavA. The cofactor is pyridoxal 5'-phosphate.

Its subcellular location is the cytoplasm. The enzyme catalyses L-lysine + H(+) = cadaverine + CO2. The protein is Inducible lysine decarboxylase (cadA) of Salmonella typhi.